A 120-amino-acid chain; its full sequence is NAD(P)H-quinone oxidoreductase subunit 3, chloroplastic (120 aa).

3 helical membrane passes run 9-29, 64-84, and 88-108; these read IFWA…LLSG, MFAL…PWAM, and VLGV…IVGL.

It belongs to the complex I subunit 3 family. As to quaternary structure, NDH is composed of at least 16 different subunits, 5 of which are encoded in the nucleus.

The protein resides in the plastid. It localises to the chloroplast thylakoid membrane. The catalysed reaction is a plastoquinone + NADH + (n+1) H(+)(in) = a plastoquinol + NAD(+) + n H(+)(out). It catalyses the reaction a plastoquinone + NADPH + (n+1) H(+)(in) = a plastoquinol + NADP(+) + n H(+)(out). In terms of biological role, NDH shuttles electrons from NAD(P)H:plastoquinone, via FMN and iron-sulfur (Fe-S) centers, to quinones in the photosynthetic chain and possibly in a chloroplast respiratory chain. The immediate electron acceptor for the enzyme in this species is believed to be plastoquinone. Couples the redox reaction to proton translocation, and thus conserves the redox energy in a proton gradient. This chain is NAD(P)H-quinone oxidoreductase subunit 3, chloroplastic, found in Fagopyrum esculentum subsp. ancestrale (Wild buckwheat).